A 453-amino-acid polypeptide reads, in one-letter code: Allantoinase (453 aa).

Zn(2+) is bound by residues histidine 59, histidine 61, lysine 146, histidine 186, histidine 242, and aspartate 315. Residue lysine 146 is modified to N6-carboxylysine.

The protein belongs to the metallo-dependent hydrolases superfamily. Allantoinase family. Homotetramer. Zn(2+) serves as cofactor. In terms of processing, carboxylation allows a single lysine to coordinate two zinc ions.

The catalysed reaction is (S)-allantoin + H2O = allantoate + H(+). The protein operates within nitrogen metabolism; (S)-allantoin degradation; allantoate from (S)-allantoin: step 1/1. Catalyzes the conversion of allantoin (5-ureidohydantoin) to allantoic acid by hydrolytic cleavage of the five-member hydantoin ring. The sequence is that of Allantoinase from Escherichia coli (strain SMS-3-5 / SECEC).